Reading from the N-terminus, the 300-residue chain is tRNA-cytidine(32) 2-sulfurtransferase (300 aa).

The PP-loop motif signature appears at 57–62 (SGGKDS). Residues Cys-132, Cys-135, and Cys-223 each coordinate [4Fe-4S] cluster.

The protein belongs to the TtcA family. Homodimer. Mg(2+) serves as cofactor. It depends on [4Fe-4S] cluster as a cofactor.

The protein resides in the cytoplasm. The enzyme catalyses cytidine(32) in tRNA + S-sulfanyl-L-cysteinyl-[cysteine desulfurase] + AH2 + ATP = 2-thiocytidine(32) in tRNA + L-cysteinyl-[cysteine desulfurase] + A + AMP + diphosphate + H(+). Its pathway is tRNA modification. In terms of biological role, catalyzes the ATP-dependent 2-thiolation of cytidine in position 32 of tRNA, to form 2-thiocytidine (s(2)C32). The sulfur atoms are provided by the cysteine/cysteine desulfurase (IscS) system. The chain is tRNA-cytidine(32) 2-sulfurtransferase from Xanthomonas campestris pv. campestris (strain B100).